A 315-amino-acid chain; its full sequence is MLRFFQMTWTTALYFLVFLSFGNSMPQKSKPFWLSADINSIEWQEGCLTTVLCSHPRFQLLKDLLPISERASISWPVTEQFLEHTVAPFVSYWPSGRIEDVSLSAQVVGVDTTYGFPRTCDQTPAVRIFPVDLYELAPESAENKTIHLKAKCFEATITVTKHVERCPWCPDPQEILISNEIPQQINLQQSALESGIHSFVGIFYKSSTSESLQVGICLLAALAFFASLAFIIMLSVYLKSKKSSRRNVSVNVQPRLIPYNSRCDDYDTRYDMPWDQQRPLTYWMSKSTVTSPNSLRSEAYQTYRIPPPPNFAPPV.

This is an uncharacterized protein from Caenorhabditis elegans.